Here is a 403-residue protein sequence, read N- to C-terminus: 4-hydroxy-3-methylbut-2-enyl diphosphate reductase (403 aa).

A [4Fe-4S] cluster-binding site is contributed by Cys-66. His-96 is a (2E)-4-hydroxy-3-methylbut-2-enyl diphosphate binding site. Position 96 (His-96) interacts with dimethylallyl diphosphate. His-96 contacts isopentenyl diphosphate. Cys-157 lines the [4Fe-4S] cluster pocket. His-185 lines the (2E)-4-hydroxy-3-methylbut-2-enyl diphosphate pocket. A dimethylallyl diphosphate-binding site is contributed by His-185. His-185 is an isopentenyl diphosphate binding site. Glu-187 acts as the Proton donor in catalysis. Thr-250 serves as a coordination point for (2E)-4-hydroxy-3-methylbut-2-enyl diphosphate. Cys-288 provides a ligand contact to [4Fe-4S] cluster. (2E)-4-hydroxy-3-methylbut-2-enyl diphosphate contacts are provided by Ser-317, Ser-318, Asn-319, and Ser-379. Positions 317, 318, 319, and 379 each coordinate dimethylallyl diphosphate. Isopentenyl diphosphate is bound by residues Ser-317, Ser-318, Asn-319, and Ser-379.

It belongs to the IspH family. The cofactor is [4Fe-4S] cluster.

The enzyme catalyses isopentenyl diphosphate + 2 oxidized [2Fe-2S]-[ferredoxin] + H2O = (2E)-4-hydroxy-3-methylbut-2-enyl diphosphate + 2 reduced [2Fe-2S]-[ferredoxin] + 2 H(+). It catalyses the reaction dimethylallyl diphosphate + 2 oxidized [2Fe-2S]-[ferredoxin] + H2O = (2E)-4-hydroxy-3-methylbut-2-enyl diphosphate + 2 reduced [2Fe-2S]-[ferredoxin] + 2 H(+). It functions in the pathway isoprenoid biosynthesis; dimethylallyl diphosphate biosynthesis; dimethylallyl diphosphate from (2E)-4-hydroxy-3-methylbutenyl diphosphate: step 1/1. It participates in isoprenoid biosynthesis; isopentenyl diphosphate biosynthesis via DXP pathway; isopentenyl diphosphate from 1-deoxy-D-xylulose 5-phosphate: step 6/6. Its function is as follows. Catalyzes the conversion of 1-hydroxy-2-methyl-2-(E)-butenyl 4-diphosphate (HMBPP) into a mixture of isopentenyl diphosphate (IPP) and dimethylallyl diphosphate (DMAPP). Acts in the terminal step of the DOXP/MEP pathway for isoprenoid precursor biosynthesis. This chain is 4-hydroxy-3-methylbut-2-enyl diphosphate reductase, found in Rippkaea orientalis (strain PCC 8801 / RF-1) (Cyanothece sp. (strain PCC 8801)).